The chain runs to 483 residues: Regulatory protein ViaA (483 aa).

The protein belongs to the ViaA family. As to quaternary structure, homodimer. Interacts with RavA.

The protein resides in the cytoplasm. Functionally, component of the RavA-ViaA chaperone complex, which may act on the membrane to optimize the function of some of the respiratory chains. ViaA stimulates the ATPase activity of RavA. This Shigella dysenteriae serotype 1 (strain Sd197) protein is Regulatory protein ViaA.